Here is a 421-residue protein sequence, read N- to C-terminus: UDP-N-acetylglucosamine 1-carboxyvinyltransferase (421 aa).

23 to 24 lines the phosphoenolpyruvate pocket; that stretch reads KN. R92 lines the UDP-N-acetyl-alpha-D-glucosamine pocket. The active-site Proton donor is the C116. C116 bears the 2-(S-cysteinyl)pyruvic acid O-phosphothioketal mark. UDP-N-acetyl-alpha-D-glucosamine-binding positions include 121 to 125, 161 to 164, D306, and I328; these read RPVDL and KVSV.

This sequence belongs to the EPSP synthase family. MurA subfamily.

The protein localises to the cytoplasm. It carries out the reaction phosphoenolpyruvate + UDP-N-acetyl-alpha-D-glucosamine = UDP-N-acetyl-3-O-(1-carboxyvinyl)-alpha-D-glucosamine + phosphate. It functions in the pathway cell wall biogenesis; peptidoglycan biosynthesis. Functionally, cell wall formation. Adds enolpyruvyl to UDP-N-acetylglucosamine. In Vibrio vulnificus (strain CMCP6), this protein is UDP-N-acetylglucosamine 1-carboxyvinyltransferase.